A 30-amino-acid chain; its full sequence is Gamma-II crystallin (30 aa).

The region spanning 1 to 30 is the Beta/gamma crystallin 'Greek key' domain; sequence GKITFYEDRNFQGRCYECSTDCPDLSPYFS.

This sequence belongs to the beta/gamma-crystallin family. Monomer.

Functionally, crystallins are the dominant structural components of the vertebrate eye lens. The sequence is that of Gamma-II crystallin from Rhizoprionodon acutus (Milk shark).